A 300-amino-acid polypeptide reads, in one-letter code: Nucleotide-binding protein Daci_5422 (300 aa).

ATP is bound at residue 10-17 (GMSGSGKS). Position 59–62 (59–62 (DARS)) interacts with GTP.

Belongs to the RapZ-like family.

Its function is as follows. Displays ATPase and GTPase activities. The sequence is that of Nucleotide-binding protein Daci_5422 from Delftia acidovorans (strain DSM 14801 / SPH-1).